Reading from the N-terminus, the 351-residue chain is N-acetyl-gamma-glutamyl-phosphate reductase (351 aa).

The active site involves cysteine 154.

It belongs to the NAGSA dehydrogenase family. Type 1 subfamily.

Its subcellular location is the cytoplasm. It carries out the reaction N-acetyl-L-glutamate 5-semialdehyde + phosphate + NADP(+) = N-acetyl-L-glutamyl 5-phosphate + NADPH + H(+). It functions in the pathway amino-acid biosynthesis; L-arginine biosynthesis; N(2)-acetyl-L-ornithine from L-glutamate: step 3/4. In terms of biological role, catalyzes the NADPH-dependent reduction of N-acetyl-5-glutamyl phosphate to yield N-acetyl-L-glutamate 5-semialdehyde. The polypeptide is N-acetyl-gamma-glutamyl-phosphate reductase (Prochlorococcus marinus (strain MIT 9215)).